A 207-amino-acid chain; its full sequence is MNSLSTSAFSLGLLLVMATAFPTPGPLAGDSKDDATSISLPLTSANKVEELIKYILGKISALRKEMCDKFNKCEDSKEALAENNLHLPILEGKDGCFQSGFNQETCLTRITTGLMEFQLHLNILQNNYEGDKENAQSVHMSTKILVQMLKSKVKNQDEVTTPDPTTDATLQAILQSQNEWLKHTTIHLILRSLEDFLQFSLRAVRIM.

The first 20 residues, 1–20, serve as a signal peptide directing secretion; sequence MNSLSTSAFSLGLLLVMATA. An intrachain disulfide couples Cys67 to Cys73. Ser76 is subject to Phosphoserine. Cys96 and Cys106 are joined by a disulfide.

This sequence belongs to the IL-6 superfamily. As to quaternary structure, component of a hexamer of two molecules each of IL6, IL6R and IL6ST; first binds to IL6R to associate with the signaling subunit IL6ST. Interacts with IL6R (via the N-terminal ectodomain); this interaction may be affected by IL6R-binding with SORL1, hence decreasing IL6 cis signaling. Interacts with SORL1 (via the N-terminal ectodomain); this interaction leads to IL6 internalization and lysosomal degradation. May form a trimeric complex with the soluble SORL1 ectodomain and soluble IL6R receptor; this interaction might stabilize circulating IL6, hence promoting IL6 trans signaling.

It localises to the secreted. Its function is as follows. Cytokine with a wide variety of biological functions in immunity, tissue regeneration, and metabolism. Binds to IL6R, then the complex associates to the signaling subunit IL6ST/gp130 to trigger the intracellular IL6-signaling pathway. The interaction with the membrane-bound IL6R and IL6ST stimulates 'classic signaling', whereas the binding of IL6 and soluble IL6R to IL6ST stimulates 'trans-signaling'. Alternatively, 'cluster signaling' occurs when membrane-bound IL6:IL6R complexes on transmitter cells activate IL6ST receptors on neighboring receiver cells. In terms of biological role, IL6 is a potent inducer of the acute phase response. Rapid production of IL6 contributes to host defense during infection and tissue injury, but excessive IL6 synthesis is involved in disease pathology. In the innate immune response, is synthesized by myeloid cells, such as macrophages and dendritic cells, upon recognition of pathogens through toll-like receptors (TLRs) at the site of infection or tissue injury. In the adaptive immune response, is required for the differentiation of B cells into immunoglobulin-secreting cells. Plays a major role in the differentiation of CD4(+) T cell subsets. Essential factor for the development of T follicular helper (Tfh) cells that are required for the induction of germinal-center formation. Required to drive naive CD4(+) T cells to the Th17 lineage. Also required for proliferation of myeloma cells and the survival of plasmablast cells. Functionally, acts as an essential factor in bone homeostasis and on vessels directly or indirectly by induction of VEGF, resulting in increased angiogenesis activity and vascular permeability. Induces, through 'trans-signaling' and synergistically with IL1B and TNF, the production of VEGF. Involved in metabolic controls, is discharged into the bloodstream after muscle contraction increasing lipolysis and improving insulin resistance. 'Trans-signaling' in central nervous system also regulates energy and glucose homeostasis. Mediates, through GLP-1, crosstalk between insulin-sensitive tissues, intestinal L cells and pancreatic islets to adapt to changes in insulin demand. Also acts as a myokine. Plays a protective role during liver injury, being required for maintenance of tissue regeneration. Also has a pivotal role in iron metabolism by regulating HAMP/hepcidin expression upon inflammation or bacterial infection. Through activation of IL6ST-YAP-NOTCH pathway, induces inflammation-induced epithelial regeneration. This chain is Interleukin-6 (IL6), found in Vulpes vulpes (Red fox).